Reading from the N-terminus, the 207-residue chain is Small ribosomal subunit protein uS4 (207 aa).

The disordered stretch occupies residues 31 to 55; it reads KCKLDSKPGQHGRTSGARTSDYGTQ. A compositionally biased stretch (polar residues) spans 42 to 53; it reads GRTSGARTSDYG. An S4 RNA-binding domain is found at 97–160; it reads SRLDNVVYRM…KKQARIVEAL (64 aa).

It belongs to the universal ribosomal protein uS4 family. In terms of assembly, part of the 30S ribosomal subunit. Contacts protein S5. The interaction surface between S4 and S5 is involved in control of translational fidelity.

One of the primary rRNA binding proteins, it binds directly to 16S rRNA where it nucleates assembly of the body of the 30S subunit. Functionally, with S5 and S12 plays an important role in translational accuracy. This Burkholderia thailandensis (strain ATCC 700388 / DSM 13276 / CCUG 48851 / CIP 106301 / E264) protein is Small ribosomal subunit protein uS4.